Reading from the N-terminus, the 2122-residue chain is Unique GC organizer UGO (2122 aa).

The next 5 helical transmembrane spans lie at 19–39 (FAVA…TNSL), 50–70 (LFGM…FVIV), 82–102 (TYIM…MQLI), 115–135 (VLTF…VLIG), and 145–165 (VVCS…DVGL). 13 disordered regions span residues 337–403 (AALH…HRSA), 422–532 (FRGL…GPFV), 565–591 (DLRE…SGLQ), 627–762 (HRRG…GRAN), 785–815 (HAAS…CSAS), 848–870 (MSRR…RAER), 903–949 (SKEG…ASAN), 999–1046 (RNET…LHSR), 1068–1308 (PSDL…HEAV), 1328–1368 (AGLS…SEEE), 1515–1540 (ANSS…AASA), 1560–1608 (AAEH…TPHT), and 1639–1727 (QGLG…TFFG). The segment covering 363-374 (RSNTLRGCSGQV) has biased composition (polar residues). Basic and acidic residues-rich tracts occupy residues 503–525 (LRMD…DPAK), 565–585 (DLRE…HAAA), and 632–645 (GARD…RGEP). The span at 672 to 687 (RLSRSRRHKTRTYRRG) shows a compositional bias: basic residues. A compositionally biased stretch (low complexity) spans 690-699 (SDGTTAGTSD). Positions 707–720 (LEDEGSDSGQESES) are enriched in acidic residues. The segment covering 725 to 735 (RRRMRSSRNRR) has biased composition (basic residues). The segment covering 741-750 (EDSSSGTSVR) has biased composition (low complexity). The segment covering 751 to 760 (SEGRHCREGR) has biased composition (basic and acidic residues). N-linked (GlcNAc...) asparagine glycosylation occurs at N762. Residues 848–860 (MSRRRRREGKSRP) show a composition bias toward basic residues. Polar residues-rich tracts occupy residues 999 to 1011 (RNET…SPAT) and 1072 to 1097 (SLFT…SARI). N1000 is a glycosylation site (N-linked (GlcNAc...) asparagine). N1165 carries N-linked (GlcNAc...) asparagine glycosylation. Residues 1220-1261 (SREDLVGEADSHVSPEKEVFVSSRREKREEQVPRSRREERRD) are compositionally biased toward basic and acidic residues. A compositionally biased stretch (basic residues) spans 1262–1276 (RRGRRWRRGRRRRKA). 2 stretches are compositionally biased toward basic and acidic residues: residues 1277 to 1289 (RECS…RDSS) and 1345 to 1359 (GDMR…HSDG). Polar residues predominate over residues 1515–1527 (ANSSTAVSSSLPD). N1516 carries an N-linked (GlcNAc...) asparagine glycan. Low complexity-rich tracts occupy residues 1528 to 1540 (STAW…AASA) and 1597 to 1608 (TQTPQTPQTPHT). Over residues 1684–1693 (LSATPSTRLQ) the composition is skewed to polar residues. The next 5 membrane-spanning stretches (helical) occupy residues 1859-1879 (VAWL…LLRL), 1956-1976 (MLAL…WHLI), 1989-2009 (IIPA…ILAV), 2017-2037 (IFLL…PPGV), and 2040-2060 (VQLF…GQLF). The segment at 2102 to 2122 (DEGSEDEVSMGSGHLVGDRSA) is disordered.

In terms of assembly, interacts with guanylate cyclase GC; the interaction regulates guanylate cyclase GC trafficking and catalytic activity.

It is found in the cell membrane. In terms of biological role, in tachyzoites, required for the cellular trafficking of guanylate cyclase GC to the cell membrane and for GC guanylate cyclase activity. This Toxoplasma gondii (strain ATCC 50853 / GT1) protein is Unique GC organizer UGO.